Here is a 300-residue protein sequence, read N- to C-terminus: Ankyrin repeat domain-containing protein 54 (300 aa).

The tract at residues 1-27 (MAAAAGDADDEPRSGHSSSEGECAVAP) is disordered. Alanine 2 is subject to N-acetylalanine. A phosphoserine mark is found at serine 58 and serine 63. The short motif at 99–117 (RRLGPTGKEVHALKRLRDS) is the Nuclear localization signal (NLS) element. ANK repeat units follow at residues 109-138 (HALKRLRDSANANDVETVQQLLEDGADPCA), 142-171 (KGRTALHFASCNGNDQIVQLLLDHGADPNQ), 175-204 (LGNTPLHLAACTNHVPVITTLLRGGARVDA), and 208-244 (AGRTPLHLAKSKLNILQEGHAQCLEAVRLEVKQIIHM). An LYN-binding region spans residues 141–241 (DKGRTALHFA…EAVRLEVKQI (101 aa)). The Nuclear export signal (NES) signature appears at 283–293 (LLASFTSLSLQ).

As to quaternary structure, interacts (via ankyrin repeat region) with LYN (via SH3-domain) in an activation-independent status of LYN. Forms a multiprotein complex with LYN and HCLS1. Interacts with TSN2, VAV1, DBNL and LASP1.

The protein localises to the nucleus. Its subcellular location is the cytoplasm. It is found in the midbody. In terms of biological role, plays an important role in regulating intracellular signaling events associated with erythroid terminal differentiation. The protein is Ankyrin repeat domain-containing protein 54 (ANKRD54) of Homo sapiens (Human).